A 1840-amino-acid chain; its full sequence is Sodium channel protein type 4 subunit alpha (1840 aa).

The Cytoplasmic segment spans residues 1–131; that stretch reads MASSSLPNLV…RVAIKVLIHA (131 aa). Residues 36 to 60 are compositionally biased toward basic and acidic residues; it reads EARLQRNKQMEIEEPERKPRSDLEA. A disordered region spans residues 36 to 63; the sequence is EARLQRNKQMEIEEPERKPRSDLEAGKN. The stretch at 113–448 is one I repeat; sequence LLSPFSIVRR…VVAMAYAEQN (336 aa). A helical transmembrane segment spans residues 132–150; it reads LFSMFIMITILTNCVFMTM. The Extracellular segment spans residues 151-157; sequence SNPPSWS. A helical transmembrane segment spans residues 158-178; that stretch reads KHVEYTFTGIYTFESLIKMLA. At 179–192 the chain is on the cytoplasmic side; that stretch reads RGFCIDDFTFLRDP. A helical membrane pass occupies residues 193-210; the sequence is WNWLDFSVITMAYVTEFV. At 211 to 216 the chain is on the extracellular side; that stretch reads DLGNIS. A helical transmembrane segment spans residues 217–233; sequence ALRTFRVLRALKTITVI. Residues 234–252 lie on the Cytoplasmic side of the membrane; sequence PGLKTIVGALIQSVKKLSD. A helical membrane pass occupies residues 253-272; the sequence is VMILTVFCLSVFALVGLQLF. The Extracellular portion of the chain corresponds to 273-385; it reads MGNLRQKCVR…PNYGYTSYDT (113 aa). Cysteines 280 and 354 form a disulfide. N-linked (GlcNAc...) asparagine glycosylation is found at N288, N291, N297, N303, N309, N315, N327, and N356. C363 and C369 are joined by a disulfide. An intramembrane region (pore-forming) is located at residues 386-410; it reads FSWAFLALFRLMTQDYWENLFQLTL. Residues 411-417 lie on the Extracellular side of the membrane; that stretch reads RAAGKTY. The helical transmembrane segment at 418 to 438 threads the bilayer; sequence MIFFVVIIFLGSFYLINLILA. Over 439-572 the chain is Cytoplasmic; sequence VVAMAYAEQN…HIIYLIVMDP (134 aa). The tract at residues 481 to 522 is disordered; the sequence is AAQALESGEEADGDPTHNKDCNGSLDASGEKGPPRPSCSADS. S487 carries the post-translational modification Phosphoserine. The II repeat unit spans residues 554–826; sequence CCAPWVKFKH…QIAIGRIKWG (273 aa). A helical transmembrane segment spans residues 573-591; the sequence is FVDLGITICIVLNTLFMAM. Residues 592-602 lie on the Extracellular side of the membrane; the sequence is EHYPMTEHFDN. The chain crosses the membrane as a helical span at residues 603 to 622; the sequence is VLSVGNLVFTGIFTAEMVLK. The Cytoplasmic segment spans residues 623–636; the sequence is LIAMDPYEYFQQGW. The chain crosses the membrane as a helical span at residues 637 to 656; sequence NIFDSFIVTLSLVELGLANV. The Extracellular segment spans residues 657–658; that stretch reads QG. Residues 659–676 traverse the membrane as a helical segment; the sequence is LSVLRSFRLLRVFKLAKS. Residues 677–692 lie on the Cytoplasmic side of the membrane; the sequence is WPTLNMLIKIIGNSVG. Residues 693 to 711 traverse the membrane as a helical segment; it reads ALGNLTLVLAIIVFIFAVV. Topologically, residues 712 to 740 are extracellular; the sequence is GMQLFGKSYKECVCKIASDCNLPRWHMND. Cysteines 725 and 731 form a disulfide. An intramembrane region (pore-forming) is located at residues 741–761; sequence FFHSFLIVFRILCGEWIETMW. Topologically, residues 762-772 are extracellular; the sequence is DCMEVAGQAMC. A disulfide bond links C763 and C772. A helical transmembrane segment spans residues 773-791; it reads LTVFLMVMVIGNLVVLNLF. Over 792-1025 the chain is Cytoplasmic; the sequence is LALLLSSFSA…ACFKIVEHNW (234 aa). Disordered regions lie at residues 854–884 and 925–983; these read EPGGAGENAEESTPEDEKKEPPPEDKELKDN and DLEM…GEQP. A compositionally biased stretch (basic and acidic residues) spans 868–884; it reads EDEKKEPPPEDKELKDN. Acidic residues-rich tracts occupy residues 925 to 940 and 968 to 983; these read DLEMPTEEETDAFSEP and EDPEEQAEENPEGEQP. The III repeat unit spans residues 1006–1319; the sequence is RGKMWWTLRR…KKYYNAMKKL (314 aa). A helical membrane pass occupies residues 1026–1043; sequence FETFIVFMILLSSGALAF. Topologically, residues 1044–1056 are extracellular; it reads EDIYIEQRRVIRT. A helical transmembrane segment spans residues 1057-1075; the sequence is ILEYADKVFTYIFILEMLL. The Cytoplasmic segment spans residues 1076 to 1089; the sequence is KWVAYGFKVYFTNA. The helical transmembrane segment at 1090 to 1108 threads the bilayer; the sequence is WCWLDFLIVDVSIISLVAN. The Extracellular portion of the chain corresponds to 1109–1116; the sequence is WLGYSELG. Residues 1117-1135 form a helical membrane-spanning segment; sequence PIKSLRTLRALRPLRALSR. The Cytoplasmic segment spans residues 1136–1152; sequence FEGMRVVVNALLGAIPS. A helical transmembrane segment spans residues 1153-1172; the sequence is IMNVLLVCLIFWLIFSIMGV. The Extracellular segment spans residues 1173–1223; it reads NLFAGKFYYCVNTTTSERFDISVVNNKSESESLMYTGQVRWMNVKVNYDNV. N-linked (GlcNAc...) asparagine glycosylation is present at N1198. Residues 1224 to 1245 constitute an intramembrane region (pore-forming); the sequence is GLGYLSLLQVATFKGWMDIMYA. Residues 1246-1262 lie on the Extracellular side of the membrane; it reads AVDSREKEEQPHYEVNL. Residues 1263-1284 form a helical membrane-spanning segment; it reads YMYLYFVIFIIFGSFFTLNLFI. The Cytoplasmic segment spans residues 1285 to 1347; that stretch reads GVIIDNFNQQ…MVYDFVTKQV (63 aa). The interval 1303-1305 is important for rapid channel inactivation; the sequence is IFM. The IV repeat unit spans residues 1328–1626; that stretch reads IPRPQNKIQG…WEKFDPDATQ (299 aa). The helical transmembrane segment at 1348 to 1365 threads the bilayer; it reads FDISIMILICLNMVTMMV. Residues 1366-1376 are Extracellular-facing; it reads ETDDQSQLKVD. Residues 1377–1395 form a helical membrane-spanning segment; the sequence is ILYNINMVFIIIFTGECVL. The Cytoplasmic portion of the chain corresponds to 1396–1407; sequence KMFALRHYYFTI. A helical transmembrane segment spans residues 1408-1425; that stretch reads GWNIFDFVVVILSIVGLA. The Extracellular segment spans residues 1426 to 1438; it reads LSDLIQKYFVSPT. A helical transmembrane segment spans residues 1439–1455; sequence LFRVIRLARIGRVLRLI. The Cytoplasmic segment spans residues 1456 to 1474; sequence RGAKGIRTLLFALMMSLPA. A helical membrane pass occupies residues 1475–1492; the sequence is LFNIGLLLFLVMFIYSIF. At 1493–1514 the chain is on the extracellular side; the sequence is GMSNFAYVKKESGIDDMFNFET. The segment at residues 1515–1537 is an intramembrane region (pore-forming); the sequence is FGNSIICLFEITTSAGWDGLLNP. The Extracellular segment spans residues 1538–1567; sequence ILNSGPPDCDPTLENPGTNVRGDCGNPSIG. C1546 and C1561 form a disulfide bridge. A helical transmembrane segment spans residues 1568–1590; it reads ICFFCSYIIISFLIVVNMYIAII. Over 1591-1840 the chain is Cytoplasmic; sequence LENFNVATEE…VRPGVKESLV (250 aa). The IQ domain occupies 1720–1749; that stretch reads EEVCAIKIQRAYRRHLLQRSVKQASYMYRH. A disordered region spans residues 1775 to 1840; sequence HEKEGDGVQS…VRPGVKESLV (66 aa). Over residues 1804-1813 the composition is skewed to low complexity; sequence PTSSSDTALT. A compositionally biased stretch (pro residues) spans 1814 to 1824; the sequence is PSPPPLPPSSS.

The protein belongs to the sodium channel (TC 1.A.1.10) family. Nav1.4/SCN4A subfamily. The Nav1.4 voltage-gated sodium channel consists of an ion-conducting alpha subunit SCN4A which is functional on its own and a regulatory beta subunit SCN1B. SCN1B strongly enhances the presence of SCN4A at the cell surface. SCN1B is also required for rapid channel inactivation and recovery after inactivation. It prevents the decrease of channel activity in response to repetitive, high-frequency depolarizations. Interacts with the syntrophins SNTA1, SNTB1 and SNTB2 (via PDZ domain); probably links SCN4A to the actin cytoskeleton and the extracellular matrix via the dystrophin-associated protein complex and regulates its localization in muscle cells. Interacts with TMEM233; probable regulator of the channel. In terms of tissue distribution, detected in skeletal muscle.

The protein localises to the cell membrane. The catalysed reaction is Na(+)(in) = Na(+)(out). With respect to regulation, potently inhibited by tetrodotoxin and saxitoxin. Inhibited by the conotoxin GVIIJ. Pore-forming subunit of Nav1.4, a voltage-gated sodium (Nav) channel that directly mediates the depolarizing phase of action potentials in excitable membranes. Navs, also called VGSCs (voltage-gated sodium channels) or VDSCs (voltage-dependent sodium channels), operate by switching between closed and open conformations depending on the voltage difference across the membrane. In the open conformation they allow Na(+) ions to selectively pass through the pore, along their electrochemical gradient. The influx of Na+ ions provokes membrane depolarization, initiating the propagation of electrical signals throughout cells and tissues. Highly expressed in skeletal muscles, Nav1.4 generates the action potential crucial for muscle contraction. This is Sodium channel protein type 4 subunit alpha from Rattus norvegicus (Rat).